Reading from the N-terminus, the 357-residue chain is Peptide chain release factor 1 (357 aa).

Position 235 is an N5-methylglutamine (Gln-235). Positions 282-294 (RQKADTERSESRR) are enriched in basic and acidic residues. The tract at residues 282–308 (RQKADTERSESRRSQVGSGDRSERIRT) is disordered.

The protein belongs to the prokaryotic/mitochondrial release factor family. Post-translationally, methylated by PrmC. Methylation increases the termination efficiency of RF1.

It is found in the cytoplasm. Peptide chain release factor 1 directs the termination of translation in response to the peptide chain termination codons UAG and UAA. This is Peptide chain release factor 1 from Brucella anthropi (strain ATCC 49188 / DSM 6882 / CCUG 24695 / JCM 21032 / LMG 3331 / NBRC 15819 / NCTC 12168 / Alc 37) (Ochrobactrum anthropi).